The following is a 348-amino-acid chain: Beta-hexosaminidase (348 aa).

Substrate is bound by residues Asp-64, Arg-72, Arg-138, and 168–169; that span reads KH. Residue His-181 is the Proton donor/acceptor of the active site. The Nucleophile role is filled by Asp-252.

The protein belongs to the glycosyl hydrolase 3 family. NagZ subfamily.

Its subcellular location is the cytoplasm. The catalysed reaction is Hydrolysis of terminal non-reducing N-acetyl-D-hexosamine residues in N-acetyl-beta-D-hexosaminides.. It participates in cell wall biogenesis; peptidoglycan recycling. Functionally, plays a role in peptidoglycan recycling by cleaving the terminal beta-1,4-linked N-acetylglucosamine (GlcNAc) from peptide-linked peptidoglycan fragments, giving rise to free GlcNAc, anhydro-N-acetylmuramic acid and anhydro-N-acetylmuramic acid-linked peptides. The chain is Beta-hexosaminidase from Nitrosomonas eutropha (strain DSM 101675 / C91 / Nm57).